We begin with the raw amino-acid sequence, 512 residues long: UDP-N-acetylglucosamine--peptide N-acetylglucosaminyltransferase GtfA subunit (512 aa).

Residue G16–Y19 coordinates UDP. Residue H251 coordinates N-acetyl-D-glucosamine. UDP contacts are provided by residues Q393–H394 and E413–G416.

The protein belongs to the glycosyltransferase group 1 family. Glycosyltransferase 4 subfamily. Forms a heterotetramer with 2 subunits each of GtfA and GtfB. Part of the accessory SecA2/SecY2 protein translocation apparatus.

The protein localises to the cytoplasm. Its subcellular location is the cell membrane. It carries out the reaction L-seryl-[protein] + UDP-N-acetyl-alpha-D-glucosamine = 3-O-[N-acetyl-alpha-D-glucosaminyl]-L-seryl-[protein] + UDP + H(+). The protein operates within protein modification; protein glycosylation. Its function is as follows. Required for polymorphic O-glycosylation of the serine-rich repeat protein (SRRP) in this bacteria. Catalyzes the first step in glycosylation by transferring N-acetylglucosamine from UDP-GlcNAc to serine residues in the substrate protein. Part of the accessory SecA2/SecY2 system specifically required to export serine-rich repeat cell wall proteins encoded in the same operon. The GtfA-GtfB complex adds GlcNAc from UDP-GlcNAc to SRRP (experimentally characterized with a truncated SSR1 construct); the alpha linkage was shown for this enzyme but not the residues glycosylated on SRRP. The sequence is that of UDP-N-acetylglucosamine--peptide N-acetylglucosaminyltransferase GtfA subunit from Limosilactobacillus reuteri subsp. suis (strain ATCC 53608 / LMG 31752 / 1063) (Lactobacillus reuteri).